Reading from the N-terminus, the 468-residue chain is Adenylosuccinate synthetase (468 aa).

GTP is bound by residues 23 to 29 (GDEGKGK) and 51 to 53 (GHE). Aspartate 24 acts as the Proton acceptor in catalysis. Mg(2+) contacts are provided by aspartate 24 and glycine 51. IMP-binding positions include 24 to 27 (DEGK), 49 to 52 (NSGH), threonine 142, arginine 156, asparagine 238, threonine 253, and arginine 317. The active-site Proton donor is histidine 52. Substrate is bound at residue 313 to 319 (VTTGRTR). GTP contacts are provided by residues arginine 319 and 345-347 (KLD).

It belongs to the adenylosuccinate synthetase family. In terms of assembly, homodimer. It depends on Mg(2+) as a cofactor.

Its subcellular location is the cytoplasm. The enzyme catalyses IMP + L-aspartate + GTP = N(6)-(1,2-dicarboxyethyl)-AMP + GDP + phosphate + 2 H(+). It participates in purine metabolism; AMP biosynthesis via de novo pathway; AMP from IMP: step 1/2. Plays an important role in the salvage pathway for purine nucleotide biosynthesis. Catalyzes the first committed step in the biosynthesis of AMP from IMP. This is Adenylosuccinate synthetase from Theileria annulata.